The primary structure comprises 338 residues: 1-aminocyclopropane-1-carboxylate deaminase (338 aa).

The residue at position 51 (Lys-51) is an N6-(pyridoxal phosphate)lysine. The Nucleophile role is filled by Ser-78.

The protein belongs to the ACC deaminase/D-cysteine desulfhydrase family. As to quaternary structure, homotrimer. Pyridoxal 5'-phosphate serves as cofactor.

It carries out the reaction 1-aminocyclopropane-1-carboxylate + H2O = 2-oxobutanoate + NH4(+). Its function is as follows. Catalyzes a cyclopropane ring-opening reaction, the irreversible conversion of 1-aminocyclopropane-1-carboxylate (ACC) to ammonia and alpha-ketobutyrate. Allows growth on ACC as a nitrogen source. The sequence is that of 1-aminocyclopropane-1-carboxylate deaminase from Burkholderia cenocepacia (strain ATCC BAA-245 / DSM 16553 / LMG 16656 / NCTC 13227 / J2315 / CF5610) (Burkholderia cepacia (strain J2315)).